Here is a 170-residue protein sequence, read N- to C-terminus: UPF0260 protein RPB_3505 (170 aa).

This sequence belongs to the UPF0260 family.

The protein is UPF0260 protein RPB_3505 of Rhodopseudomonas palustris (strain HaA2).